A 211-amino-acid chain; its full sequence is FMN-dependent NADH:quinone oxidoreductase (211 aa).

17 to 19 (SYS) provides a ligand contact to FMN.

The protein belongs to the azoreductase type 1 family. Homodimer. FMN serves as cofactor.

The catalysed reaction is 2 a quinone + NADH + H(+) = 2 a 1,4-benzosemiquinone + NAD(+). The enzyme catalyses N,N-dimethyl-1,4-phenylenediamine + anthranilate + 2 NAD(+) = 2-(4-dimethylaminophenyl)diazenylbenzoate + 2 NADH + 2 H(+). Its function is as follows. Quinone reductase that provides resistance to thiol-specific stress caused by electrophilic quinones. Also exhibits azoreductase activity. Catalyzes the reductive cleavage of the azo bond in aromatic azo compounds to the corresponding amines. The chain is FMN-dependent NADH:quinone oxidoreductase from Bacillus velezensis (strain DSM 23117 / BGSC 10A6 / LMG 26770 / FZB42) (Bacillus amyloliquefaciens subsp. plantarum).